A 379-amino-acid chain; its full sequence is Protein RecA (379 aa).

The interval 1 to 23 is disordered; that stretch reads MSVDVKSAQSSKSDSLQVEPRPG. Polar residues predominate over residues 7–16; sequence SAQSSKSDSL. 84–91 lines the ATP pocket; the sequence is GPESSGKT.

It belongs to the RecA family.

The protein localises to the cytoplasm. Can catalyze the hydrolysis of ATP in the presence of single-stranded DNA, the ATP-dependent uptake of single-stranded DNA by duplex DNA, and the ATP-dependent hybridization of homologous single-stranded DNAs. It interacts with LexA causing its activation and leading to its autocatalytic cleavage. This Prochlorococcus marinus (strain MIT 9313) protein is Protein RecA.